Here is a 390-residue protein sequence, read N- to C-terminus: GTPase Obg (390 aa).

Positions 1–159 (MKFIDESLIR…RDLLLELMLL (159 aa)) constitute an Obg domain. Positions 160-333 (ADVGMLGLPN…LCRDIMDFII (174 aa)) constitute an OBG-type G domain. Residues 166-173 (GLPNAGKS), 191-195 (FTTLV), 213-216 (DIPG), 283-286 (NKID), and 314-316 (SAA) contribute to the GTP site. The Mg(2+) site is built by serine 173 and threonine 193.

Belongs to the TRAFAC class OBG-HflX-like GTPase superfamily. OBG GTPase family. As to quaternary structure, monomer. Mg(2+) serves as cofactor.

The protein resides in the cytoplasm. Functionally, an essential GTPase which binds GTP, GDP and possibly (p)ppGpp with moderate affinity, with high nucleotide exchange rates and a fairly low GTP hydrolysis rate. Plays a role in control of the cell cycle, stress response, ribosome biogenesis and in those bacteria that undergo differentiation, in morphogenesis control. In Haemophilus influenzae (strain 86-028NP), this protein is GTPase Obg.